The chain runs to 290 residues: Glycine--tRNA ligase alpha subunit (290 aa).

Belongs to the class-II aminoacyl-tRNA synthetase family. In terms of assembly, tetramer of two alpha and two beta subunits.

Its subcellular location is the cytoplasm. It carries out the reaction tRNA(Gly) + glycine + ATP = glycyl-tRNA(Gly) + AMP + diphosphate. This Syntrophotalea carbinolica (strain DSM 2380 / NBRC 103641 / GraBd1) (Pelobacter carbinolicus) protein is Glycine--tRNA ligase alpha subunit.